The following is a 742-amino-acid chain: Transcription factor FFUJ_09177 (742 aa).

The segment at residues 15–41 (CVSCARSKQRCDGHSPCGRCSLKNLDC) is a DNA-binding region (zn(2)-C6 fungal-type). 2 disordered regions span residues 50–80 (GQNS…VQSQ) and 218–244 (HSLD…SVRD). A compositionally biased stretch (polar residues) spans 218–240 (HSLDISSYQGQSNQTSPETTSHS).

It is found in the nucleus. Transcription factor; part of the DMATS1 gene cluster that mediates the biosynthesis of a reversely N-prenylated monomeric L-tryptophan (r-N-DMAT). Seems not to regulate the expression of the DMATS1 cluster. This Gibberella fujikuroi (strain CBS 195.34 / IMI 58289 / NRRL A-6831) (Bakanae and foot rot disease fungus) protein is Transcription factor FFUJ_09177.